Reading from the N-terminus, the 497-residue chain is Replication factor C large subunit (497 aa).

Residue 50-57 (GPAGVGKT) participates in ATP binding. Residues 428–455 (KRRSLGRDEGKAFFEKKPKKQTPDKKQM) show a composition bias toward basic and acidic residues. The disordered stretch occupies residues 428-497 (KRRSLGRDEG…AKPQKTLFDF (70 aa)). The span at 456-465 (DLTQIINSTP) shows a compositional bias: polar residues. The span at 466–476 (QEDKVEKKETE) shows a compositional bias: basic and acidic residues.

The protein belongs to the activator 1 small subunits family. RfcL subfamily. Heteromultimer composed of small subunits (RfcS) and large subunits (RfcL).

Functionally, part of the RFC clamp loader complex which loads the PCNA sliding clamp onto DNA. The polypeptide is Replication factor C large subunit (Methanococcoides burtonii (strain DSM 6242 / NBRC 107633 / OCM 468 / ACE-M)).